A 264-amino-acid chain; its full sequence is Thymidylate synthase (264 aa).

Arg-21 serves as a coordination point for dUMP. His-51 serves as a coordination point for (6R)-5,10-methylene-5,6,7,8-tetrahydrofolate. DUMP is bound at residue Arg-126–Arg-127. Cys-146 functions as the Nucleophile in the catalytic mechanism. DUMP contacts are provided by residues Arg-166–Asp-169, Asn-177, and His-207–Tyr-209. Asp-169 is a binding site for (6R)-5,10-methylene-5,6,7,8-tetrahydrofolate. Ala-263 serves as a coordination point for (6R)-5,10-methylene-5,6,7,8-tetrahydrofolate.

It belongs to the thymidylate synthase family. Bacterial-type ThyA subfamily. As to quaternary structure, homodimer.

Its subcellular location is the cytoplasm. The catalysed reaction is dUMP + (6R)-5,10-methylene-5,6,7,8-tetrahydrofolate = 7,8-dihydrofolate + dTMP. It functions in the pathway pyrimidine metabolism; dTTP biosynthesis. Its function is as follows. Catalyzes the reductive methylation of 2'-deoxyuridine-5'-monophosphate (dUMP) to 2'-deoxythymidine-5'-monophosphate (dTMP) while utilizing 5,10-methylenetetrahydrofolate (mTHF) as the methyl donor and reductant in the reaction, yielding dihydrofolate (DHF) as a by-product. This enzymatic reaction provides an intracellular de novo source of dTMP, an essential precursor for DNA biosynthesis. The protein is Thymidylate synthase of Shewanella amazonensis (strain ATCC BAA-1098 / SB2B).